The primary structure comprises 279 residues: Zinc-finger homeodomain protein 1 (279 aa).

Over residues 1 to 13 (MDFDDHDDGDEEM) the composition is skewed to acidic residues. Positions 1–47 (MDFDDHDDGDEEMPPMPVSSSYETPPQHGLAGGGMAPKPPGEIGSHV) are disordered. A ZF-HD dimerization-type; degenerate zinc finger spans residues 57–106 (YRECLKNHAVGIGGHAVDGCGEFMAAGEEGTIDALRCAACNCHRNFHRKE). A disordered region spans residues 157–191 (AAAAAAGGHPQRPLALPSTSHSGRDDGDDLSGMVG). The homeobox DNA-binding region spans 215–278 (KKRFRTKFTQ…NNKHTLGKKL (64 aa)).

In terms of assembly, homo- and heterodimer with other ZFHD proteins.

It localises to the nucleus. Putative transcription factor. In Oryza sativa subsp. indica (Rice), this protein is Zinc-finger homeodomain protein 1 (ZHD1).